Here is a 379-residue protein sequence, read N- to C-terminus: Dual-specificity RNA methyltransferase RlmN (379 aa).

Glutamate 95 functions as the Proton acceptor in the catalytic mechanism. The 245-residue stretch at 101–345 folds into the Radical SAM core domain; it reads EETRGTLCVS…TTVRKTRGDD (245 aa). An intrachain disulfide couples cysteine 108 to cysteine 350. Residues cysteine 115, cysteine 119, and cysteine 122 each contribute to the [4Fe-4S] cluster site. Residues 176-177, serine 208, 230-232, and asparagine 307 each bind S-adenosyl-L-methionine; these read GE and SLH. Cysteine 350 functions as the S-methylcysteine intermediate in the catalytic mechanism.

The protein belongs to the radical SAM superfamily. RlmN family. [4Fe-4S] cluster serves as cofactor.

It localises to the cytoplasm. The enzyme catalyses adenosine(2503) in 23S rRNA + 2 reduced [2Fe-2S]-[ferredoxin] + 2 S-adenosyl-L-methionine = 2-methyladenosine(2503) in 23S rRNA + 5'-deoxyadenosine + L-methionine + 2 oxidized [2Fe-2S]-[ferredoxin] + S-adenosyl-L-homocysteine. It carries out the reaction adenosine(37) in tRNA + 2 reduced [2Fe-2S]-[ferredoxin] + 2 S-adenosyl-L-methionine = 2-methyladenosine(37) in tRNA + 5'-deoxyadenosine + L-methionine + 2 oxidized [2Fe-2S]-[ferredoxin] + S-adenosyl-L-homocysteine. Its function is as follows. Specifically methylates position 2 of adenine 2503 in 23S rRNA and position 2 of adenine 37 in tRNAs. m2A2503 modification seems to play a crucial role in the proofreading step occurring at the peptidyl transferase center and thus would serve to optimize ribosomal fidelity. This Burkholderia cenocepacia (strain ATCC BAA-245 / DSM 16553 / LMG 16656 / NCTC 13227 / J2315 / CF5610) (Burkholderia cepacia (strain J2315)) protein is Dual-specificity RNA methyltransferase RlmN.